A 62-amino-acid chain; its full sequence is Small EDRK-rich factor 1 (62 aa).

2 stretches are compositionally biased toward basic and acidic residues: residues 1–30 (MARG…KEDS) and 50–62 (AANE…TREK). The segment at 1–62 (MARGNQRELA…ERKSMQTREK (62 aa)) is disordered.

It belongs to the SERF family. Interacts with SNCA; this interaction promotes the aggregation of SNCA.

The protein resides in the cytoplasm. It is found in the cytosol. Its subcellular location is the nucleus. In terms of biological role, positive regulator of amyloid protein aggregation and proteotoxicity. Induces conformational changes in amyloid proteins, such as APP, HTT, and SNCA, driving them into compact formations preceding the formation of aggregates. The polypeptide is Small EDRK-rich factor 1 (SERF1) (Bos taurus (Bovine)).